The chain runs to 380 residues: DNA primase small subunit PriS (380 aa).

Catalysis depends on residues Asp103, Asp105, and Asp284.

The protein belongs to the eukaryotic-type primase small subunit family. Heterodimer of a small subunit (PriS) and a large subunit (PriL). Mg(2+) serves as cofactor. The cofactor is Mn(2+).

Functionally, catalytic subunit of DNA primase, an RNA polymerase that catalyzes the synthesis of short RNA molecules used as primers for DNA polymerase during DNA replication. The small subunit contains the primase catalytic core and has DNA synthesis activity on its own. Binding to the large subunit stabilizes and modulates the activity, increasing the rate of DNA synthesis while decreasing the length of the DNA fragments, and conferring RNA synthesis capability. The DNA polymerase activity may enable DNA primase to also catalyze primer extension after primer synthesis. May also play a role in DNA repair. In Methanocorpusculum labreanum (strain ATCC 43576 / DSM 4855 / Z), this protein is DNA primase small subunit PriS.